A 263-amino-acid chain; its full sequence is Receptor expression-enhancing protein 3-A (263 aa).

The next 2 helical transmembrane spans lie at 2–22 (VSWI…PAYF) and 35–55 (YVRW…EAIA). 2 disordered regions span residues 161–228 (GDET…SMRS) and 240–263 (YASL…AHHL). Acidic residues predominate over residues 199–214 (DDNTDEDVEVNSEDEV). Positions 242-251 (SLKHKPKKRP) are enriched in basic residues.

It belongs to the DP1 family.

The protein localises to the endoplasmic reticulum membrane. In terms of biological role, microtubule-binding protein required to ensure proper cell division and nuclear envelope reassembly by sequestering the endoplasmic reticulum away from chromosomes during mitosis. Probably acts by clearing the endoplasmic reticulum membrane from metaphase chromosomes. This Xenopus laevis (African clawed frog) protein is Receptor expression-enhancing protein 3-A (reep3-a).